The sequence spans 149 residues: Mediator of RNA polymerase II transcription subunit 9 (149 aa).

The tract at residues 18–64 is disordered; that stretch reads TNPTLDKPNAEATKEEFSSAENRDEKDYLTNQQPKNLSTPSTSSNGE. The segment covering 25–45 has biased composition (basic and acidic residues); it reads PNAEATKEEFSSAENRDEKDY. A compositionally biased stretch (polar residues) spans 46-63; it reads LTNQQPKNLSTPSTSSNG. 2 short sequence motifs (nuclear localization signal) span residues 77–99 and 136–149; these read RKDP…HRLK and KRDV…KLQR.

The protein belongs to the Mediator complex subunit 9 family. In terms of assembly, component of the Mediator complex, which is composed of at least 21 subunits that form three structurally distinct submodules. The Mediator head module contains MED6, MED8, MED11, SRB4/MED17, SRB5/MED18, ROX3/MED19, SRB2/MED20 and SRB6/MED22, the middle module contains MED1, MED4, NUT1/MED5, MED7, CSE2/MED9, NUT2/MED10, SRB7/MED21 and SOH1/MED31, and the tail module contains MED2, PGD1/MED3, RGR1/MED14, GAL11/MED15 and SIN4/MED16. The head and the middle modules interact directly with RNA polymerase II, whereas the elongated tail module interacts with gene-specific regulatory proteins. CSE2/MED9 interacts directly with MED4.

It localises to the nucleus. Functionally, component of the Mediator complex, a coactivator involved in the regulated transcription of nearly all RNA polymerase II-dependent genes. Mediator functions as a bridge to convey information from gene-specific regulatory proteins to the basal RNA polymerase II transcription machinery. The Mediator complex, having a compact conformation in its free form, is recruited to promoters by direct interactions with regulatory proteins and serves for the assembly of a functional preinitiation complex with RNA polymerase II and the general transcription factors. The Mediator complex unfolds to an extended conformation and partially surrounds RNA polymerase II, specifically interacting with the unphosphorylated form of the C-terminal domain (CTD) of RNA polymerase II. The Mediator complex dissociates from the RNA polymerase II holoenzyme and stays at the promoter when transcriptional elongation begins. The polypeptide is Mediator of RNA polymerase II transcription subunit 9 (CSE2) (Saccharomyces cerevisiae (strain ATCC 204508 / S288c) (Baker's yeast)).